The primary structure comprises 618 residues: Chaperone protein HscA homolog (618 aa).

The protein belongs to the heat shock protein 70 family.

In terms of biological role, chaperone involved in the maturation of iron-sulfur cluster-containing proteins. Has a low intrinsic ATPase activity which is markedly stimulated by HscB. In Variovorax paradoxus (strain S110), this protein is Chaperone protein HscA homolog.